The sequence spans 239 residues: Phosphoribosylaminoimidazole-succinocarboxamide synthase (239 aa).

It belongs to the SAICAR synthetase family.

It catalyses the reaction 5-amino-1-(5-phospho-D-ribosyl)imidazole-4-carboxylate + L-aspartate + ATP = (2S)-2-[5-amino-1-(5-phospho-beta-D-ribosyl)imidazole-4-carboxamido]succinate + ADP + phosphate + 2 H(+). It participates in purine metabolism; IMP biosynthesis via de novo pathway; 5-amino-1-(5-phospho-D-ribosyl)imidazole-4-carboxamide from 5-amino-1-(5-phospho-D-ribosyl)imidazole-4-carboxylate: step 1/2. In Bacillus cereus (strain B4264), this protein is Phosphoribosylaminoimidazole-succinocarboxamide synthase.